The sequence spans 492 residues: GDP-Man:Man(3)GlcNAc(2)-PP-Dol alpha-1,2-mannosyltransferase (492 aa).

Over 1–19 (MAADTGSWCVYAVLRFFYS) the chain is Lumenal. A helical transmembrane segment spans residues 20-40 (LFFPGLMICGVLCVYLVIGLW). The Cytoplasmic segment spans residues 41–233 (VIRWHLQRKK…SRNALLSKAK (193 aa)). The helical intramembrane region spans 234 to 254 (LIYYYLFAFVYGLVGSCSDIV). Over 255–399 (MVNSSWTLNH…IGLHTMWNEH (145 aa)) the chain is Cytoplasmic. Positions 400-420 (FGIGVVECMAAGTVILAHNSG) form an intramembrane region, helical. Residues 421–492 (GPKLDIVIPH…FLCSMEKLLT (72 aa)) lie on the Cytoplasmic side of the membrane.

It belongs to the glycosyltransferase group 1 family. Glycosyltransferase 4 subfamily.

Its subcellular location is the endoplasmic reticulum membrane. The catalysed reaction is an alpha-D-Man-(1-&gt;3)-[alpha-D-Man-(1-&gt;6)]-beta-D-Man-(1-&gt;4)-beta-D-GlcNAc-(1-&gt;4)-alpha-D-GlcNAc-diphospho-di-trans,poly-cis-dolichol + 2 GDP-alpha-D-mannose = an alpha-D-Man-(1-&gt;2)-alpha-D-Man-(1-&gt;2)-alpha-D-Man-(1-&gt;3)-[alpha-D-Man-(1-&gt;6)]-beta-D-Man-(1-&gt;4)-beta-D-GlcNAc-(1-&gt;4)-alpha-D-GlcNAc-diphospho-di-trans,poly-cis-dolichol + 2 GDP + 2 H(+). Its pathway is protein modification; protein glycosylation. Its function is as follows. GDP-Man:Man(3)GlcNAc(2)-PP-Dol alpha-1,2-mannosyltransferase that operates in the biosynthetic pathway of dolichol-linked oligosaccharides, the glycan precursors employed in protein asparagine (N)-glycosylation. The assembly of dolichol-linked oligosaccharides begins on the cytosolic side of the endoplasmic reticulum membrane and finishes in its lumen. The sequential addition of sugars to dolichol pyrophosphate produces dolichol-linked oligosaccharides containing fourteen sugars, including two GlcNAcs, nine mannoses and three glucoses. Once assembled, the oligosaccharide is transferred from the lipid to nascent proteins by oligosaccharyltransferases. Catalyzes, on the cytoplasmic face of the endoplasmic reticulum, the addition of the fourth and fifth mannose residues to the dolichol-linked oligosaccharide chain, to produce Man(5)GlcNAc(2)-PP-dolichol core oligosaccharide. Man(5)GlcNAc(2)-PP-dolichol is a substrate for ALG3, the following enzyme in the biosynthetic pathway. In Mus musculus (Mouse), this protein is GDP-Man:Man(3)GlcNAc(2)-PP-Dol alpha-1,2-mannosyltransferase.